The primary structure comprises 467 residues: Uronate isomerase (467 aa).

It belongs to the metallo-dependent hydrolases superfamily. Uronate isomerase family.

It carries out the reaction D-glucuronate = D-fructuronate. The catalysed reaction is aldehydo-D-galacturonate = keto-D-tagaturonate. Its pathway is carbohydrate metabolism; pentose and glucuronate interconversion. This Solibacter usitatus (strain Ellin6076) protein is Uronate isomerase.